Consider the following 383-residue polypeptide: Queuine tRNA-ribosyltransferase (383 aa).

The Proton acceptor role is filled by D89. Residues 89–93, D143, Q187, and G214 each bind substrate; that span reads DSGGF. The RNA binding stretch occupies residues 245 to 251; that stretch reads GVGDLID. Residue D264 is the Nucleophile of the active site. The interval 269 to 273 is RNA binding; important for wobble base 34 recognition; sequence TRNAR. Zn(2+) is bound by residues C302, C304, C307, and H333.

It belongs to the queuine tRNA-ribosyltransferase family. Homodimer. Within each dimer, one monomer is responsible for RNA recognition and catalysis, while the other monomer binds to the replacement base PreQ1. Requires Zn(2+) as cofactor.

The catalysed reaction is 7-aminomethyl-7-carbaguanine + guanosine(34) in tRNA = 7-aminomethyl-7-carbaguanosine(34) in tRNA + guanine. The protein operates within tRNA modification; tRNA-queuosine biosynthesis. Its function is as follows. Catalyzes the base-exchange of a guanine (G) residue with the queuine precursor 7-aminomethyl-7-deazaguanine (PreQ1) at position 34 (anticodon wobble position) in tRNAs with GU(N) anticodons (tRNA-Asp, -Asn, -His and -Tyr). Catalysis occurs through a double-displacement mechanism. The nucleophile active site attacks the C1' of nucleotide 34 to detach the guanine base from the RNA, forming a covalent enzyme-RNA intermediate. The proton acceptor active site deprotonates the incoming PreQ1, allowing a nucleophilic attack on the C1' of the ribose to form the product. After dissociation, two additional enzymatic reactions on the tRNA convert PreQ1 to queuine (Q), resulting in the hypermodified nucleoside queuosine (7-(((4,5-cis-dihydroxy-2-cyclopenten-1-yl)amino)methyl)-7-deazaguanosine). The protein is Queuine tRNA-ribosyltransferase of Thermodesulfovibrio yellowstonii (strain ATCC 51303 / DSM 11347 / YP87).